The chain runs to 421 residues: Uracil permease (421 aa).

A run of 12 helical transmembrane segments spans residues 18–38 (IPLS…VPML), 41–61 (INPA…IFLC), 65–85 (IPAY…VIST), 89–109 (EAAL…GLLV), 115–135 (GWIE…VIGL), 160–180 (PKVI…NVMF), 186–206 (IIPI…LGIV), 232–252 (IAII…HLIV), 304–324 (VYSI…SFVG), 329–349 (LIQT…FGVI), 371–391 (ILTA…WGNF), and 393–413 (MKGM…FNII).

It belongs to the nucleobase:cation symporter-2 (NCS2) (TC 2.A.40) family.

Its subcellular location is the cell membrane. Its activity is regulated as follows. Inhibited by the proton gradient disruptor carbonyl cyanide m-chlorophenylhydrazone (CCCP), but not by the sodium gradient disruptor ouabain. Both xanthine and uric acid act as competitive inhibitors of uracil transport. Functionally, specific for the uptake of uracil. Transport is probably proton-dependent. The sequence is that of Uracil permease from Paenibacillus larvae subsp. larvae (strain NRRL B-3650 / LMG 16245).